The primary structure comprises 508 residues: Photosystem II CP47 reaction center protein (508 aa).

The next 6 helical transmembrane spans lie at 21–36 (SVHIMHTALVAGWAGS), 101–115 (IVFSGLCFLAAIWHW), 140–156 (GIHLFLSGVACFGFGAF), 203–218 (IAAGILGILAGLFHLS), 237–252 (VLSSSIAAVFFAAFIV), and 457–472 (TFALLFFSGHIWHGAR).

This sequence belongs to the PsbB/PsbC family. PsbB subfamily. In terms of assembly, PSII is composed of 1 copy each of membrane proteins PsbA, PsbB, PsbC, PsbD, PsbE, PsbF, PsbH, PsbI, PsbJ, PsbK, PsbL, PsbM, PsbT, PsbX, PsbY, PsbZ, Psb30/Ycf12, at least 3 peripheral proteins of the oxygen-evolving complex and a large number of cofactors. It forms dimeric complexes. Binds multiple chlorophylls. PSII binds additional chlorophylls, carotenoids and specific lipids. is required as a cofactor.

The protein resides in the plastid. It is found in the chloroplast thylakoid membrane. Functionally, one of the components of the core complex of photosystem II (PSII). It binds chlorophyll and helps catalyze the primary light-induced photochemical processes of PSII. PSII is a light-driven water:plastoquinone oxidoreductase, using light energy to abstract electrons from H(2)O, generating O(2) and a proton gradient subsequently used for ATP formation. The sequence is that of Photosystem II CP47 reaction center protein from Pinus thunbergii (Japanese black pine).